Reading from the N-terminus, the 104-residue chain is Putative thioredoxin-4 (104 aa).

A Thioredoxin domain is found at 2 to 104 (SKVTNVSINT…QLRKILDSMK (103 aa)). Catalysis depends on nucleophile residues Cys-31 and Cys-34. Cys-31 and Cys-34 are oxidised to a cystine.

Belongs to the thioredoxin family.

Its function is as follows. Participates in various redox reactions through the reversible oxidation of its active center dithiol to a disulfide and catalyzes dithiol-disulfide exchange reactions. This chain is Putative thioredoxin-4 (trxD), found in Dictyostelium discoideum (Social amoeba).